A 112-amino-acid chain; its full sequence is Putative regulatory protein DP2861 (112 aa).

This sequence belongs to the RemA family.

The chain is Putative regulatory protein DP2861 from Desulfotalea psychrophila (strain LSv54 / DSM 12343).